The sequence spans 305 residues: tRNA pseudouridine synthase B (305 aa).

Aspartate 39 serves as the catalytic Nucleophile. In terms of domain architecture, PUA spans 237–305; it reads LPVIIVPGEF…FLLKPHKVLK (69 aa).

Belongs to the pseudouridine synthase TruB family. Type 1 subfamily.

It catalyses the reaction uridine(55) in tRNA = pseudouridine(55) in tRNA. Its function is as follows. Responsible for synthesis of pseudouridine from uracil-55 in the psi GC loop of transfer RNAs. The protein is tRNA pseudouridine synthase B of Moorella thermoacetica (strain ATCC 39073 / JCM 9320).